Here is a 304-residue protein sequence, read N- to C-terminus: N-acetylmuramic acid 6-phosphate etherase (304 aa).

The residue at position 2 (Ser-2) is a Phosphoserine. The 164-residue stretch at 59–222 folds into the SIS domain; sequence AYESFQNGGR…STAVMVKIGK (164 aa). Residue Glu-87 is the Proton donor of the active site. Residue Glu-118 is part of the active site.

The protein belongs to the GCKR-like family. MurNAc-6-P etherase subfamily. Homodimer.

It catalyses the reaction N-acetyl-D-muramate 6-phosphate + H2O = N-acetyl-D-glucosamine 6-phosphate + (R)-lactate. It functions in the pathway amino-sugar metabolism; N-acetylmuramate degradation. Its function is as follows. Specifically catalyzes the cleavage of the D-lactyl ether substituent of MurNAc 6-phosphate, producing GlcNAc 6-phosphate and D-lactate. This Bacillus subtilis (strain 168) protein is N-acetylmuramic acid 6-phosphate etherase.